The following is a 433-amino-acid chain: 3-phosphoshikimate 1-carboxyvinyltransferase (433 aa).

Positions 23, 24, and 28 each coordinate 3-phosphoshikimate. K23 serves as a coordination point for phosphoenolpyruvate. The phosphoenolpyruvate site is built by G95 and R123. 6 residues coordinate 3-phosphoshikimate: S170, S171, Q172, S198, D317, and K344. Q172 contributes to the phosphoenolpyruvate binding site. The active-site Proton acceptor is D317. Positions 348, 391, and 416 each coordinate phosphoenolpyruvate.

This sequence belongs to the EPSP synthase family. As to quaternary structure, monomer.

The protein localises to the cytoplasm. The enzyme catalyses 3-phosphoshikimate + phosphoenolpyruvate = 5-O-(1-carboxyvinyl)-3-phosphoshikimate + phosphate. Its pathway is metabolic intermediate biosynthesis; chorismate biosynthesis; chorismate from D-erythrose 4-phosphate and phosphoenolpyruvate: step 6/7. Catalyzes the transfer of the enolpyruvyl moiety of phosphoenolpyruvate (PEP) to the 5-hydroxyl of shikimate-3-phosphate (S3P) to produce enolpyruvyl shikimate-3-phosphate and inorganic phosphate. This is 3-phosphoshikimate 1-carboxyvinyltransferase from Neisseria gonorrhoeae (strain NCCP11945).